The sequence spans 208 residues: Small ribosomal subunit protein uS4A (208 aa).

The region spanning 98 to 159 is the S4 RNA-binding domain; the sequence is SRLDNVAYNM…HAKSYLRIKA (62 aa).

It belongs to the universal ribosomal protein uS4 family. In terms of assembly, part of the 30S ribosomal subunit. Contacts protein S5. The interaction surface between S4 and S5 is involved in control of translational fidelity.

Functionally, one of the primary rRNA binding proteins, it binds directly to 16S rRNA where it nucleates assembly of the body of the 30S subunit. With S5 and S12 plays an important role in translational accuracy. This Nitrosomonas europaea (strain ATCC 19718 / CIP 103999 / KCTC 2705 / NBRC 14298) protein is Small ribosomal subunit protein uS4A (rpsD1).